The primary structure comprises 376 residues: MANLRIALVAGEASGDILGAGLMRALKAQHPAVEFIGVGGPLMQAEGLTSYFPMERLSVMGLVEVLGRLRELLKRRKDLIATLIAEKPDVFIGIDAPDFNLNIELKLRQAGIKTVHYVSPSVWAWRQKRVLKIREGCDLMLTLLPFEARFYEEKGVPVRFVGHTLADTIPLEADRAAARAELGLPDGPLVALMPGSRGGEVSRLGALFLDTAQRLRAMRPGVRFVIPCANPERRAQLEELLAGRDLPVTLLDGKSHLALAACNAVLIASGTATLEALLYKRPMVVAYRLAPLTFWILKRMVKSPYVSLPNLLAQRLLVPELLQDDATVEALAQTLSPLIDGGEEQTRGFDEIHRTLRLDASNQAADAVLNLIGQTR.

This sequence belongs to the LpxB family.

It catalyses the reaction a lipid X + a UDP-2-N,3-O-bis[(3R)-3-hydroxyacyl]-alpha-D-glucosamine = a lipid A disaccharide + UDP + H(+). The protein operates within bacterial outer membrane biogenesis; LPS lipid A biosynthesis. Condensation of UDP-2,3-diacylglucosamine and 2,3-diacylglucosamine-1-phosphate to form lipid A disaccharide, a precursor of lipid A, a phosphorylated glycolipid that anchors the lipopolysaccharide to the outer membrane of the cell. This is Lipid-A-disaccharide synthase from Pseudomonas fluorescens (strain Pf0-1).